Reading from the N-terminus, the 197-residue chain is Peptidyl-tRNA hydrolase (197 aa).

Residue Tyr-17 participates in tRNA binding. His-22 serves as the catalytic Proton acceptor. TRNA contacts are provided by Phe-68, Asn-70, and Asn-116.

This sequence belongs to the PTH family. In terms of assembly, monomer.

Its subcellular location is the cytoplasm. It catalyses the reaction an N-acyl-L-alpha-aminoacyl-tRNA + H2O = an N-acyl-L-amino acid + a tRNA + H(+). In terms of biological role, hydrolyzes ribosome-free peptidyl-tRNAs (with 1 or more amino acids incorporated), which drop off the ribosome during protein synthesis, or as a result of ribosome stalling. Catalyzes the release of premature peptidyl moieties from peptidyl-tRNA molecules trapped in stalled 50S ribosomal subunits, and thus maintains levels of free tRNAs and 50S ribosomes. The chain is Peptidyl-tRNA hydrolase from Yersinia enterocolitica serotype O:8 / biotype 1B (strain NCTC 13174 / 8081).